A 55-amino-acid chain; its full sequence is Large ribosomal subunit protein eL40 (55 aa).

Belongs to the eukaryotic ribosomal protein eL40 family.

The polypeptide is Large ribosomal subunit protein eL40 (Ignicoccus hospitalis (strain KIN4/I / DSM 18386 / JCM 14125)).